A 270-amino-acid chain; its full sequence is Protein-ADP-ribose hydrolase (270 aa).

The region spanning 73-267 (VSVKDCQKTN…LYDTYLQKEN (195 aa)) is the Macro domain. Residues D92, I93, and N106 each coordinate ADP-D-ribose. Zn(2+) is bound by residues C112, H117, and C119. Residues C119, I120, D121, S212, T213, G214, E215, and F216 each coordinate ADP-D-ribose.

This sequence belongs to the MacroD-type family. Zn-Macro subfamily. Zn(2+) is required as a cofactor.

The catalysed reaction is 4-O-(ADP-D-ribosyl)-L-aspartyl-[protein] + H2O = L-aspartyl-[protein] + ADP-D-ribose + H(+). ADP-ribosylhydrolase that specifically reverses the SirTM-mediated mono-ADP-ribosylation at an asparatate residue of GcvH-L, by releasing ADP-ribose from the target protein. May play a role in the regulation of the response to host-induced oxidative stress. This Streptococcus pyogenes serotype M6 (strain ATCC BAA-946 / MGAS10394) protein is Protein-ADP-ribose hydrolase.